Consider the following 92-residue polypeptide: UPF0250 protein XF_1271 (92 aa).

The protein belongs to the UPF0250 family.

In Xylella fastidiosa (strain 9a5c), this protein is UPF0250 protein XF_1271.